The following is a 454-amino-acid chain: Bifunctional protein GlmU (454 aa).

Residues 1–227 form a pyrophosphorylase region; that stretch reads MTQLSVVILA…FMEVEGANNR (227 aa). UDP-N-acetyl-alpha-D-glucosamine is bound by residues 9–12, Lys23, Gln74, 79–80, 101–103, Gly138, Glu152, Asn167, and Asn225; these read LAAG, GT, and YGD. Mg(2+) is bound at residue Asp103. Asn225 serves as a coordination point for Mg(2+). The linker stretch occupies residues 228-248; it reads LQLAALERFYQKTQAEKLLLA. Residues 249-454 form an N-acetyltransferase region; it reads GVRLIDQARF…QGWQRPTKKK (206 aa). UDP-N-acetyl-alpha-D-glucosamine is bound by residues Arg331 and Lys349. The Proton acceptor role is filled by His361. Tyr364 and Asn375 together coordinate UDP-N-acetyl-alpha-D-glucosamine. Acetyl-CoA contacts are provided by residues Ala378, 384–385, Ser403, Ala421, and Arg438; that span reads NY.

In the N-terminal section; belongs to the N-acetylglucosamine-1-phosphate uridyltransferase family. The protein in the C-terminal section; belongs to the transferase hexapeptide repeat family. Homotrimer. The cofactor is Mg(2+).

Its subcellular location is the cytoplasm. The catalysed reaction is alpha-D-glucosamine 1-phosphate + acetyl-CoA = N-acetyl-alpha-D-glucosamine 1-phosphate + CoA + H(+). It carries out the reaction N-acetyl-alpha-D-glucosamine 1-phosphate + UTP + H(+) = UDP-N-acetyl-alpha-D-glucosamine + diphosphate. It participates in nucleotide-sugar biosynthesis; UDP-N-acetyl-alpha-D-glucosamine biosynthesis; N-acetyl-alpha-D-glucosamine 1-phosphate from alpha-D-glucosamine 6-phosphate (route II): step 2/2. The protein operates within nucleotide-sugar biosynthesis; UDP-N-acetyl-alpha-D-glucosamine biosynthesis; UDP-N-acetyl-alpha-D-glucosamine from N-acetyl-alpha-D-glucosamine 1-phosphate: step 1/1. Its pathway is bacterial outer membrane biogenesis; LPS lipid A biosynthesis. In terms of biological role, catalyzes the last two sequential reactions in the de novo biosynthetic pathway for UDP-N-acetylglucosamine (UDP-GlcNAc). The C-terminal domain catalyzes the transfer of acetyl group from acetyl coenzyme A to glucosamine-1-phosphate (GlcN-1-P) to produce N-acetylglucosamine-1-phosphate (GlcNAc-1-P), which is converted into UDP-GlcNAc by the transfer of uridine 5-monophosphate (from uridine 5-triphosphate), a reaction catalyzed by the N-terminal domain. In Actinobacillus pleuropneumoniae serotype 7 (strain AP76), this protein is Bifunctional protein GlmU.